A 477-amino-acid chain; its full sequence is Bifunctional protein HldE (477 aa).

The ribokinase stretch occupies residues 1–318 (MKVNLPAFER…ENAVRGRAAT (318 aa)). 195-198 (NLSE) contributes to the ATP binding site. Residue aspartate 264 is part of the active site. The cytidylyltransferase stretch occupies residues 344 to 477 (MTNGVFDILH…IKKIQTESEK (134 aa)).

It in the N-terminal section; belongs to the carbohydrate kinase PfkB family. The protein in the C-terminal section; belongs to the cytidylyltransferase family. Homodimer.

The enzyme catalyses D-glycero-beta-D-manno-heptose 7-phosphate + ATP = D-glycero-beta-D-manno-heptose 1,7-bisphosphate + ADP + H(+). It carries out the reaction D-glycero-beta-D-manno-heptose 1-phosphate + ATP + H(+) = ADP-D-glycero-beta-D-manno-heptose + diphosphate. Its pathway is nucleotide-sugar biosynthesis; ADP-L-glycero-beta-D-manno-heptose biosynthesis; ADP-L-glycero-beta-D-manno-heptose from D-glycero-beta-D-manno-heptose 7-phosphate: step 1/4. It functions in the pathway nucleotide-sugar biosynthesis; ADP-L-glycero-beta-D-manno-heptose biosynthesis; ADP-L-glycero-beta-D-manno-heptose from D-glycero-beta-D-manno-heptose 7-phosphate: step 3/4. Its function is as follows. Catalyzes the phosphorylation of D-glycero-D-manno-heptose 7-phosphate at the C-1 position to selectively form D-glycero-beta-D-manno-heptose-1,7-bisphosphate. Catalyzes the ADP transfer from ATP to D-glycero-beta-D-manno-heptose 1-phosphate, yielding ADP-D-glycero-beta-D-manno-heptose. The chain is Bifunctional protein HldE from Salmonella arizonae (strain ATCC BAA-731 / CDC346-86 / RSK2980).